The following is a 122-amino-acid chain: Large ribosomal subunit protein uL14 (122 aa).

The protein belongs to the universal ribosomal protein uL14 family. As to quaternary structure, part of the 50S ribosomal subunit. Forms a cluster with proteins L3 and L19. In the 70S ribosome, L14 and L19 interact and together make contacts with the 16S rRNA in bridges B5 and B8.

Binds to 23S rRNA. Forms part of two intersubunit bridges in the 70S ribosome. This Citrifermentans bemidjiense (strain ATCC BAA-1014 / DSM 16622 / JCM 12645 / Bem) (Geobacter bemidjiensis) protein is Large ribosomal subunit protein uL14.